A 465-amino-acid polypeptide reads, in one-letter code: Hydroxyacid-oxoacid transhydrogenase, mitochondrial (465 aa).

This sequence belongs to the iron-containing alcohol dehydrogenase family. Hydroxyacid-oxoacid transhydrogenase subfamily.

Its subcellular location is the mitochondrion. It carries out the reaction (S)-3-hydroxybutanoate + 2-oxoglutarate = (R)-2-hydroxyglutarate + acetoacetate. The enzyme catalyses 4-hydroxybutanoate + 2-oxoglutarate = (R)-2-hydroxyglutarate + succinate semialdehyde. Catalyzes the cofactor-independent reversible oxidation of gamma-hydroxybutyrate (GHB) to succinic semialdehyde (SSA) coupled to reduction of 2-ketoglutarate (2-KG) to D-2-hydroxyglutarate (D-2-HG). L-3-hydroxybutyrate (L-3-OHB) is also a substrate for HOT when using 2-KG as hydrogen acceptor, resulting in the formation of D-2-HG. This chain is Hydroxyacid-oxoacid transhydrogenase, mitochondrial, found in Caenorhabditis briggsae.